A 535-amino-acid chain; its full sequence is T-box transcription factor TBX21 (535 aa).

Positions 1–62 (MGIVEPGCGD…SLGSPYPGGA (62 aa)) are disordered. S53 is modified (phosphoserine). Position 77 is a phosphotyrosine (Y77). The segment at 83-109 (AAGFPGAGESFPPPADAEGYQPGEGYA) is disordered. Y118 carries the phosphotyrosine modification. The segment at residues 141 to 326 (LNNHLLWSKF…NNPFAKGFRE (186 aa)) is a DNA-binding region (T-box). At Y220 the chain carries Phosphotyrosine; by ABL1. S225 carries the post-translational modification Phosphoserine. Position 266 is a phosphotyrosine; by ABL1 (Y266). Residue T303 is modified to Phosphothreonine. Y305 is modified (phosphotyrosine; by ABL1). K314 is covalently cross-linked (Glycyl lysine isopeptide (Lys-Gly) (interchain with G-Cter in ubiquitin)). The interval 449 to 535 (RPMRTLPMEP…EGQFYNYFPN (87 aa)) is disordered. Low complexity predominate over residues 503 to 520 (SPYPSSGDSSSPAGAPSP). S513 is subject to Phosphoserine. Y530 is subject to Phosphotyrosine; by ITK.

Interacts with RUNX1, RUNX3, ITK, ABL1, RELA, CDK9 and KDM6B. The phosphorylated form (at Thr-303) interacts with NFATC2. Interacts with SMARCA4 in a KDM6B-dependent manner. Interacts with CCTN1. Interacts with USP10. The phosphorylated form (at Tyr-530) interacts with GATA3. In terms of processing, phosphorylations at Ser-53, Tyr-77, Ser-225 and Ser-513 are regulated by mTORC1. Phosphorylation at Tyr-530 is essential for its interaction GATA3. Phosphorylation at Tyr-220, Tyr-266 and Tyr-305 enhances its transcriptional activator activity. Phosphorylation at Thr-303 is required for its interaction with NFATC2. Ubiquitinated at Lys-314, leading to its degradation by the proteasome. Ubiquitination is essential for controlling protein stability, binding to the T-box-binding element of the IFN-gamma promoter, and for interaction with NFATC2 through induction of phosphorylation at Thr-303. Deubiquitinated by USP10 leading to its stabilization. As to expression, T-cell specific.

It localises to the nucleus. Lineage-defining transcription factor which initiates Th1 lineage development from naive Th precursor cells both by activating Th1 genetic programs and by repressing the opposing Th2 and Th17 genetic programs. Activates transcription of a set of genes important for Th1 cell function, including those encoding IFN-gamma and the chemokine receptor CXCR3. Induces permissive chromatin accessibilty and CpG methylation in IFNG. Activates IFNG and CXCR3 genes in part by recruiting chromatin remodeling complexes including KDM6B, a SMARCA4-containing SWI/SNF-complex, and an H3K4me2-methyltransferase complex to their promoters and all of these complexes serve to establish a more permissive chromatin state conducive with transcriptional activation. Can activate Th1 genes also via recruitment of Mediator complex and P-TEFb (composed of CDK9 and CCNT1/cyclin-T1) in the form of the super elongation complex (SEC) to super-enhancers and associated genes in activated Th1 cells. Inhibits the Th17 cell lineage commitment by blocking RUNX1-mediated transactivation of Th17 cell-specific transcriptinal regulator RORC. Inhibits the Th2 cell lineage commitment by suppressing the production of Th2 cytokines, such as IL-4, IL-5, and IL- 13, via repression of transcriptional regulators GATA3 and NFATC2. Protects Th1 cells from amplifying aberrant type-I IFN response in an IFN-gamma abundant microenvironment by acting as a repressor of type-I IFN transcription factors and type-I IFN-stimulated genes. Acts as a regulator of antiviral B-cell responses; controls chronic viral infection by promoting the antiviral antibody IgG2a isotype switching and via regulation of a broad antiviral gene expression program. Required for the correct development of natural killer (NK) and mucosal-associated invariant T (MAIT) cells. The chain is T-box transcription factor TBX21 (TBX21) from Homo sapiens (Human).